A 157-amino-acid polypeptide reads, in one-letter code: Small ribosomal subunit protein uS7 (157 aa).

The protein belongs to the universal ribosomal protein uS7 family. As to quaternary structure, part of the 30S ribosomal subunit. Contacts proteins S9 and S11.

In terms of biological role, one of the primary rRNA binding proteins, it binds directly to 16S rRNA where it nucleates assembly of the head domain of the 30S subunit. Is located at the subunit interface close to the decoding center, probably blocks exit of the E-site tRNA. This chain is Small ribosomal subunit protein uS7, found in Albidiferax ferrireducens (strain ATCC BAA-621 / DSM 15236 / T118) (Rhodoferax ferrireducens).